The chain runs to 122 residues: Large ribosomal subunit protein bL12 (122 aa).

It belongs to the bacterial ribosomal protein bL12 family. In terms of assembly, homodimer. Part of the ribosomal stalk of the 50S ribosomal subunit. Forms a multimeric L10(L12)X complex, where L10 forms an elongated spine to which 2 to 4 L12 dimers bind in a sequential fashion. Binds GTP-bound translation factors.

In terms of biological role, forms part of the ribosomal stalk which helps the ribosome interact with GTP-bound translation factors. Is thus essential for accurate translation. The chain is Large ribosomal subunit protein bL12 from Streptococcus sanguinis (strain SK36).